The chain runs to 97 residues: Single insulin-like growth factor-binding domain protein-1 (97 aa).

An N-terminal signal peptide occupies residues 1-19 (MKTLFVFAVGIMLSMRASA). Residues 20-96 (FTCPECRPEL…PEIVGTCVKI (77 aa)) form the IGFBP N-terminal domain. Threonine 21 carries O-linked (GalNAc...) threonine glycosylation. 6 cysteine pairs are disulfide-bonded: cysteine 22–cysteine 45, cysteine 25–cysteine 47, cysteine 30–cysteine 48, cysteine 36–cysteine 51, cysteine 59–cysteine 75, and cysteine 69–cysteine 93.

In terms of tissue distribution, expressed in hemocytes.

The protein localises to the secreted. Its function is as follows. Has a role in the innate immune system. This chain is Single insulin-like growth factor-binding domain protein-1, found in Cupiennius salei (American wandering spider).